A 176-amino-acid polypeptide reads, in one-letter code: MVNSMPKPFLTPGTLYCGAAPAVISTVLGSCVAVCLIDRHNRAAGMNHFVLPHNPAGEDSLRYGDVALDRLHARMGELGCETKDLRAKVFGGAAVLPFGATGDSVGTKNVKIAIEWLHAQGIPTLARRTGGENGLLIRFYTATGRVLVRTIQSAITIDLGGISPAFDSRQSPFFQE.

This sequence belongs to the CheD family.

It carries out the reaction L-glutaminyl-[protein] + H2O = L-glutamyl-[protein] + NH4(+). In terms of biological role, probably deamidates glutamine residues to glutamate on methyl-accepting chemotaxis receptors (MCPs), playing an important role in chemotaxis. This Rhodospirillum rubrum (strain ATCC 11170 / ATH 1.1.1 / DSM 467 / LMG 4362 / NCIMB 8255 / S1) protein is Probable chemoreceptor glutamine deamidase CheD.